The primary structure comprises 315 residues: MAGFPLGGGSHSRDNPAPPVPPVHPADAASFLYATRGGSFQLWQQQEQQPFYASNIIRFADDAPPAPSLAGASSSSSSRGMRSSGGGGGGGGGGISCQDCGNQAKKDCTHMRCRTCCKSRGFACATHVKSTWVPAAKRRERQQQLAALAASAAATAGGAGPSRDPTKRPRARPSATTPTTSSGDQQMVTVAERFPREVSSEAVFRCVRLGPVDQAEAEVAYQTAVSIGGHVFKGILHDVGPEALAVAGGGGASEYHFRLTGDGSSPSTAAAGEAGSGGGGNIIVSSAVVMDPYPTPGPYGAFPAGTPFFHGHPRP.

The segment covering 1-10 has biased composition (gly residues); sequence MAGFPLGGGS. Disordered stretches follow at residues 1-24 and 64-92; these read MAGF…PPVH and PPAP…GGGG. Over residues 70-82 the composition is skewed to low complexity; that stretch reads AGASSSSSSRGMR. Positions 83 to 92 are enriched in gly residues; that stretch reads SSGGGGGGGG. Zn(2+) contacts are provided by C97, C100, C108, C113, C117, and C124. The zn(2)-C6 fungal-type; degenerate DNA-binding region spans 97 to 124; that stretch reads CQDCGNQAKKDCTHMRCRTCCKSRGFAC. Composition is skewed to low complexity over residues 143 to 156 and 172 to 182; these read QQLA…AATA and RPSATTPTTSS. Residues 143–186 are disordered; it reads QQLAALAASAAATAGGAGPSRDPTKRPRARPSATTPTTSSGDQQ. Residues 227 to 230 carry the Required for homo- and heterodimerization motif; it reads IGGH.

The protein belongs to the SHI protein family. As to quaternary structure, forms homodimers (via C-terminus). Interacts with SPL14/IPA1 (via C-terminus). Predominantly expressed in axillary buds and young panicles.

It localises to the nucleus. Its function is as follows. Regulates tillering and panicle branching by modulating SPL14/IPA1 transcriptional activity on the downstream TB1 and DEP1 target genes. Binds directly to the 5'-T/GCTCTAC-3' DNA motif found in the promoter regions of both TB1 and DEP1. Represses the DNA binding activity of SPL14/IPA1 toward the promoters of both TB1 and DEP1. Exhibits weak transcriptional activation activity in yeast cells. This is Protein SHORT INTERNODES 1 from Oryza sativa subsp. japonica (Rice).